The following is a 545-amino-acid chain: CTP synthase (545 aa).

The segment at 1-266 is amidoligase domain; the sequence is MTTRYIFVTG…DELVVKRFGI (266 aa). Residue S14 participates in CTP binding. S14 lines the UTP pocket. ATP contacts are provided by residues 15 to 20 and D72; that span reads SLGKGI. Mg(2+) is bound by residues D72 and E140. Residues 147–149, 187–192, and K223 contribute to the CTP site; these read DIE and KTKPTQ. Residues 187–192 and K223 contribute to the UTP site; that span reads KTKPTQ. Residue 239-241 coordinates ATP; sequence KDV. A Glutamine amidotransferase type-1 domain is found at 291–542; sequence TIGMVGKYIE…VAAATAYQKR (252 aa). Residue G352 coordinates L-glutamine. C379 (nucleophile; for glutamine hydrolysis) is an active-site residue. L-glutamine contacts are provided by residues 380–383, E403, and R470; that span reads LGLQ. Residues H515 and E517 contribute to the active site.

Belongs to the CTP synthase family. In terms of assembly, homotetramer.

It carries out the reaction UTP + L-glutamine + ATP + H2O = CTP + L-glutamate + ADP + phosphate + 2 H(+). It catalyses the reaction L-glutamine + H2O = L-glutamate + NH4(+). The catalysed reaction is UTP + NH4(+) + ATP = CTP + ADP + phosphate + 2 H(+). The protein operates within pyrimidine metabolism; CTP biosynthesis via de novo pathway; CTP from UDP: step 2/2. Its activity is regulated as follows. Allosterically activated by GTP, when glutamine is the substrate; GTP has no effect on the reaction when ammonia is the substrate. The allosteric effector GTP functions by stabilizing the protein conformation that binds the tetrahedral intermediate(s) formed during glutamine hydrolysis. Inhibited by the product CTP, via allosteric rather than competitive inhibition. Functionally, catalyzes the ATP-dependent amination of UTP to CTP with either L-glutamine or ammonia as the source of nitrogen. Regulates intracellular CTP levels through interactions with the four ribonucleotide triphosphates. This chain is CTP synthase, found in Shewanella sediminis (strain HAW-EB3).